A 358-amino-acid chain; its full sequence is Photosystem II protein D1 2 (358 aa).

Transmembrane regions (helical) follow at residues 28 to 45, 117 to 132, and 141 to 155; these read YVGW…AATI, HFLI…QWEL, and WICV…AAMA. A chlorophyll a-binding site is contributed by histidine 117. Position 125 (tyrosine 125) interacts with pheophytin a. The [CaMn4O5] cluster site is built by aspartate 169 and glutamate 188. A helical membrane pass occupies residues 196 to 217; it reads FHMLGVAGVFGGSLFSAMHGSL. Histidine 197 contacts chlorophyll a. Residues histidine 214 and 263–264 each bind a quinone; that span reads SF. Histidine 214 serves as a coordination point for Fe cation. Histidine 271 is a binding site for Fe cation. The chain crosses the membrane as a helical span at residues 273–287; sequence FLGAWPVVGIWFTSM. [CaMn4O5] cluster is bound by residues histidine 331, glutamate 332, aspartate 341, and alanine 343. The propeptide occupies 344-358; that stretch reads AAESTPVALQAPAIG.

Belongs to the reaction center PufL/M/PsbA/D family. In terms of assembly, PSII is composed of 1 copy each of membrane proteins PsbA, PsbB, PsbC, PsbD, PsbE, PsbF, PsbH, PsbI, PsbJ, PsbK, PsbL, PsbM, PsbT, PsbX, PsbY, PsbZ, Psb30/Ycf12, peripheral proteins PsbO, CyanoQ (PsbQ), PsbU, PsbV and a large number of cofactors. It forms dimeric complexes. The cofactor is The D1/D2 heterodimer binds P680, chlorophylls that are the primary electron donor of PSII, and subsequent electron acceptors. It shares a non-heme iron and each subunit binds pheophytin, quinone, additional chlorophylls, carotenoids and lipids. D1 provides most of the ligands for the Mn4-Ca-O5 cluster of the oxygen-evolving complex (OEC). There is also a Cl(-1) ion associated with D1 and D2, which is required for oxygen evolution. The PSII complex binds additional chlorophylls, carotenoids and specific lipids.. In terms of processing, tyr-160 forms a radical intermediate that is referred to as redox-active TyrZ, YZ or Y-Z. Post-translationally, C-terminally processed by CtpA; processing is essential to allow assembly of the oxygen-evolving complex and thus photosynthetic growth.

It is found in the cellular thylakoid membrane. The catalysed reaction is 2 a plastoquinone + 4 hnu + 2 H2O = 2 a plastoquinol + O2. In terms of biological role, photosystem II (PSII) is a light-driven water:plastoquinone oxidoreductase that uses light energy to abstract electrons from H(2)O, generating O(2) and a proton gradient subsequently used for ATP formation. It consists of a core antenna complex that captures photons, and an electron transfer chain that converts photonic excitation into a charge separation. The D1/D2 (PsbA/PsbD) reaction center heterodimer binds P680, the primary electron donor of PSII as well as several subsequent electron acceptors. The protein is Photosystem II protein D1 2 of Synechococcus sp. (strain CC9605).